A 249-amino-acid chain; its full sequence is NAD(P)H-quinone oxidoreductase subunit T, chloroplastic (249 aa).

Residues 1–45 constitute a chloroplast transit peptide; it reads MAYATSTYARTSCIILPKIQNGAHFTDDTKAFRRITARRVTRIYA. Residues 44-84 are disordered; sequence YASQGPTKPSKPSPGVDTRIHWESPDEGWIGGRSDPAKSVD. One can recognise a J domain in the interval 106–172; that stretch reads SHYQFLGVST…ETRRFYDWTL (67 aa). The chain crosses the membrane as a helical span at residues 224–244; sequence LTFDILIVLFAVCCIAFVIVF.

In terms of assembly, part of the chloroplast NDH complex, composed of a mixture of chloroplast and nucleus encoded subunits. Component of the electron donor-binding subcomplex, at least composed of NDHS, NDHT and NDHU.

The protein resides in the plastid. It localises to the chloroplast thylakoid membrane. The catalysed reaction is a plastoquinone + NADH + (n+1) H(+)(in) = a plastoquinol + NAD(+) + n H(+)(out). The enzyme catalyses a plastoquinone + NADPH + (n+1) H(+)(in) = a plastoquinol + NADP(+) + n H(+)(out). Functionally, NDH shuttles electrons from NAD(P)H:plastoquinone, via FMN and iron-sulfur (Fe-S) centers, to quinones in the photosynthetic chain and possibly in a chloroplast respiratory chain. The immediate electron acceptor for the enzyme in this species is believed to be plastoquinone. Couples the redox reaction to proton translocation, and thus conserves the redox energy in a proton gradient. Required for the accumulation of both the NDH subcomplex A and NDHS. In Arabidopsis thaliana (Mouse-ear cress), this protein is NAD(P)H-quinone oxidoreductase subunit T, chloroplastic.